Consider the following 120-residue polypeptide: Protein CcdB (120 aa).

Residues 3-118 enclose the Response regulatory domain; that stretch reads RVLVVDDAKF…KVLEAVSRVM (116 aa). Aspartate 53 carries the 4-aspartylphosphate modification.

The chain is Protein CcdB (ccdB) from Bacillus subtilis (strain 168).